The following is a 297-amino-acid chain: NAD(P)-dependent methylenetetrahydromethanopterin dehydrogenase (297 aa).

To M.extorquens MtdA. In terms of assembly, homohexamer.

It localises to the cytoplasm. It catalyses the reaction 5,10-methylenetetrahydromethanopterin + NAD(+) = 5,10-methenyl-5,6,7,8-tetrahydromethanopterin + NADH. It carries out the reaction 5,10-methylenetetrahydromethanopterin + NADP(+) = 5,10-methenyl-5,6,7,8-tetrahydromethanopterin + NADPH. It functions in the pathway one-carbon metabolism; formaldehyde degradation; formate from formaldehyde (H(4)MPT route): step 2/5. Catalyzes the dehydrogenation of methylene-H(4)MPT. This Methylorubrum extorquens (strain ATCC 14718 / DSM 1338 / JCM 2805 / NCIMB 9133 / AM1) (Methylobacterium extorquens) protein is NAD(P)-dependent methylenetetrahydromethanopterin dehydrogenase (mtdB).